Consider the following 398-residue polypeptide: Putative tyrosine-protein phosphatase C15H7.3 (398 aa).

A compositionally biased stretch (basic residues) spans 1–15 (MERSQKSARKKKKTS). Positions 1-114 (MERSQKSARK…EPWSEEEPAK (114 aa)) are disordered. Basic and acidic residues predominate over residues 18–40 (GNDRSIRSERKSKQKKPAGEKSQ). Positions 41–50 (KSRRTRKSRG) are enriched in basic residues. Residues 55 to 73 (GFTSRETIQPSSSGQSEGT) are compositionally biased toward polar residues. Residues 74-114 (TRMDDQKDEKKDDKKEEKKEERKEEKKEEVKEPWSEEEPAK) are compositionally biased toward basic and acidic residues. Residues 125-376 (TNVGGTFKQT…GTVHRSMACW (252 aa)) enclose the Tyrosine-protein phosphatase domain.

This sequence belongs to the protein-tyrosine phosphatase family. Non-receptor class subfamily.

It carries out the reaction O-phospho-L-tyrosyl-[protein] + H2O = L-tyrosyl-[protein] + phosphate. This Caenorhabditis elegans protein is Putative tyrosine-protein phosphatase C15H7.3.